The sequence spans 332 residues: Cytoplasmic phosphatidylinositol transfer protein 1 (332 aa).

Residues Ser119, Ser122, Ser270, and Ser274 each carry the phosphoserine modification. The segment covering 272–281 (PSSAPSTPLS) has biased composition (low complexity). A disordered region spans residues 272 to 332 (PSSAPSTPLS…SEKPCRPKSE (61 aa)). At Thr278 the chain carries Phosphothreonine.

Belongs to the PtdIns transfer protein family. PI transfer class IIB subfamily. As to expression, widely expressed in brain, with expression in the gray matters of pre- and postnatal brains. In terms of tissue distribution, weakly expressed in brain and is rather confined to the embryonic stage.

It is found in the cytoplasm. It localises to the nucleus. The catalysed reaction is a 1,2-diacyl-sn-glycero-3-phospho-(1D-myo-inositol)(in) = a 1,2-diacyl-sn-glycero-3-phospho-(1D-myo-inositol)(out). The enzyme catalyses a 1,2-diacyl-sn-glycero-3-phosphate(in) = a 1,2-diacyl-sn-glycero-3-phosphate(out). Functionally, catalyzes the transfer of phosphatidylinositol (PI) and phosphatidic acid (PA) between membranes. Binds PA derived from the phospholipase D signaling pathway and among the cellular PA species, preferably binds to the C16:0/16:1 and C16:1/18:1 PA species. Specifically binds to phosphatidylinositol but not to other phospholipids and may play a role in the phosphoinositide-mediated signaling in the neural development. The chain is Cytoplasmic phosphatidylinositol transfer protein 1 (Pitpnc1) from Mus musculus (Mouse).